The sequence spans 158 residues: UPF0262 protein RSKD131_1985 (158 aa).

The protein belongs to the UPF0262 family.

This Cereibacter sphaeroides (strain KD131 / KCTC 12085) (Rhodobacter sphaeroides) protein is UPF0262 protein RSKD131_1985.